The primary structure comprises 110 residues: UPF0060 membrane protein ASA_2267 (110 aa).

4 helical membrane-spanning segments follow: residues 7–27, 33–53, 63–83, and 87–107; these read IGLFLITAVAEIVGCYLPYLW, SVWLLLPAGLSLVLFAWLLSL, AAYGGVYIFVAILWLWLVDGI, and LWDLVGSLVALFGMAIIMFAP.

This sequence belongs to the UPF0060 family.

The protein resides in the cell inner membrane. The protein is UPF0060 membrane protein ASA_2267 of Aeromonas salmonicida (strain A449).